A 276-amino-acid chain; its full sequence is Undecaprenyl-diphosphatase (276 aa).

5 consecutive transmembrane segments (helical) span residues 84–104 (YRLG…GLFF), 115–135 (LWVV…AEYV), 188–208 (FGFL…LPDA), 222–242 (QLLV…AWLL), and 250–270 (MYWF…LLAT).

The protein belongs to the UppP family.

The protein resides in the cell membrane. The enzyme catalyses di-trans,octa-cis-undecaprenyl diphosphate + H2O = di-trans,octa-cis-undecaprenyl phosphate + phosphate + H(+). In terms of biological role, catalyzes the dephosphorylation of undecaprenyl diphosphate (UPP). Confers resistance to bacitracin. This Mycobacterium tuberculosis (strain ATCC 25177 / H37Ra) protein is Undecaprenyl-diphosphatase.